The sequence spans 563 residues: Glucocorticoid modulatory element-binding protein 1 (563 aa).

The residue at position 2 (Ala2) is an N-acetylalanine. An SAND domain is found at 72–156 (ASTIEANEDM…RKMMDSGQID (85 aa)). Position 103 (Cys103) interacts with Zn(2+). DNA is bound by residues Lys129, Lys133, Lys136, and Arg147. Residues His160, Cys164, and Cys168 each contribute to the Zn(2+) site. Positions 304-355 (MDTVKKVLDNRKNQVEQGEEQFLYTLTDLERQLEEQKKQAQDHRLKSQTVQN) form a coiled coil. The disordered stretch occupies residues 360 to 385 (PVSTPKPPKRPRLQRPASTTVLSPSP).

Homodimer, and heterodimer of GMEB1 and GMEB2. Interacts with TRIM63. Interacts with the glucocorticoid receptor (NR3C1) and NCOA2/TIF2. May interact with HSP27 and CREB-binding protein (CBP).

Its subcellular location is the nucleus. The protein localises to the cytoplasm. Trans-acting factor that binds to glucocorticoid modulatory elements (GME) present in the TAT (tyrosine aminotransferase) promoter and increases sensitivity to low concentrations of glucocorticoids. Also binds to the transferrin receptor promoter. In Bos taurus (Bovine), this protein is Glucocorticoid modulatory element-binding protein 1 (GMEB1).